We begin with the raw amino-acid sequence, 411 residues long: Proline-responsive transcriptional activator PutR (411 aa).

The protein belongs to the CdaR family.

Functionally, activates transcription of the putBCP operon. Requires proline as a coactivator. The sequence is that of Proline-responsive transcriptional activator PutR from Bacillus subtilis (strain 168).